Here is a 919-residue protein sequence, read N- to C-terminus: MFS-type transporter clz9 (919 aa).

Polar residues predominate over residues 1–11 (MAASTKPTTKL). Positions 1-33 (MAASTKPTTKLSTEEDDVSRRDSESSADFMKSN) are disordered. The helical transmembrane segment at 69-89 (VVASFAAAISPFSTSTYYPVV) threads the bilayer. Asparagine 104 is a glycosylation site (N-linked (GlcNAc...) asparagine). The next 3 helical transmembrane spans lie at 132 to 152 (PMFLVCFVTYFVANVGLALQN), 192 to 212 (LIYATLGSTLGPFIGPVIGGL), and 222 to 242 (VFWFLLCMGTVFALLIFIFFG). N-linked (GlcNAc...) asparagine glycosylation is present at asparagine 260. A run of 4 helical transmembrane segments spans residues 303–323 (FILSVSGGLLYAGYSSVTSVL), 333–353 (YDAVQVGLCYLPVGFGSLLAY), 393–413 (LGFVFPMILVCSGLLVAYGWQ), and 418–438 (APLAPILVTMFLIAIILTGVM). Asparagine 461 carries an N-linked (GlcNAc...) asparagine glycan. A helical transmembrane segment spans residues 465–485 (LLLGAGAVAVVGPLNKSAGIG). The 169-residue stretch at 641–809 (REWVTLIQGI…FTSANICSSF (169 aa)) folds into the DDE-1 domain. Positions 840-897 (EAPWEAKTPSNRKKKQIQKRGTLTKGEGEDTLAQKEADQQIEREQRQGGEQSGRSRQA) are disordered. The span at 865 to 886 (GEGEDTLAQKEADQQIEREQRQ) shows a compositional bias: basic and acidic residues. Positions 887–896 (GGEQSGRSRQ) are enriched in low complexity. N-linked (GlcNAc...) asparagine glycosylation is present at asparagine 915.

This sequence belongs to the major facilitator superfamily. CAR1 family.

Its subcellular location is the membrane. Functionally, MFS-type transporter; part of the gene cluster that mediates the biosynthesis of squalestatin S1 (SQS1, also known as zaragozic acid A), a heavily oxidized fungal polyketide that offers potent cholesterol lowering activity by targeting squalene synthase (SS). In Cochliobolus lunatus (Filamentous fungus), this protein is MFS-type transporter clz9.